The primary structure comprises 344 residues: Golgi-associated RAB2 interactor protein 1B (344 aa).

The protein belongs to the GARIN family.

It is found in the golgi apparatus. RAB2B effector protein required for accurate acrosome formation and normal male fertility. In complex with RAB2A/RAB2B, seems to suppress excessive vesicle trafficking during acrosome formation. In Rattus norvegicus (Rat), this protein is Golgi-associated RAB2 interactor protein 1B (Garin1b).